The sequence spans 231 residues: Ribonuclease 3 (231 aa).

An RNase III domain is found at 5–134 (QKKLKNDYGL…FLGALFIDQG (130 aa)). Mg(2+) is bound at residue Glu47. Asp51 is an active-site residue. Positions 120 and 123 each coordinate Mg(2+). Glu123 is a catalytic residue. Residues 160-229 (DYKTELQEVL…AENAIKGQNH (70 aa)) form the DRBM domain.

This sequence belongs to the ribonuclease III family. Homodimer. Mg(2+) is required as a cofactor.

It is found in the cytoplasm. It carries out the reaction Endonucleolytic cleavage to 5'-phosphomonoester.. Digests double-stranded RNA. Involved in the processing of primary rRNA transcript to yield the immediate precursors to the large and small rRNAs (23S and 16S). Processes some mRNAs, and tRNAs when they are encoded in the rRNA operon. Processes pre-crRNA and tracrRNA of type II CRISPR loci if present in the organism. This chain is Ribonuclease 3, found in Lactococcus lactis subsp. lactis (strain IL1403) (Streptococcus lactis).